A 465-amino-acid chain; its full sequence is MVRGRHRSRDPQRRDLRGRDRRSASRTDARRQSAAERGCRRSQRGSAEGCACGRQTGPRAARSACCTACPSRSRRMSTTEGRPNFNGVPANKDFVAPSDSPVVHNLKKAGAIVIGLTNTPEFSFRGFTDNPLHGLTLNPWDPNITCGGSSGGAGSAVAAGIGTIAHGNDIGGSLRWPAHCNGVATIKPTQGRIPAFNGSATAERPMLAHLMSAQGPLARHVGDVRLALDVMSQADPRDPWWVPAPLAGPRPKGPIKVALARIPEDMDVDPSVRAALRQAADHLERSGYRVTEVDVPDIDGVWQTWCDIITNETVVMQEAGMLKVTSEDFHKAWGGMKTKANVLDLKAWMQATAARNGHIRAWQLFFEEYPVVLAPTTVKPTPGPRDDTVSADRVKEIFWGEIRFISAINVLGLPGAVVPVTLHDGKPIGVQLIAGRYREDLALDAAAAIEKRAGVLAHRLWETME.

The interval 1 to 40 (MVRGRHRSRDPQRRDLRGRDRRSASRTDARRQSAAERGCR) is disordered. Over residues 9–39 (RDPQRRDLRGRDRRSASRTDARRQSAAERGC) the composition is skewed to basic and acidic residues. Ser-149 serves as the catalytic Charge relay system. Ser-173 (acyl-ester intermediate) is an active-site residue.

The protein belongs to the amidase family.

It participates in plant hormone metabolism; auxin biosynthesis. In terms of biological role, hydrolyzes indole-3-acetamide (IAM) into indole-3-acetic acid (IAA). The protein is Indoleacetamide hydrolase (bam) of Bradyrhizobium japonicum.